Consider the following 223-residue polypeptide: Ras-related protein Rab-37 (223 aa).

Residues 1-23 form a disordered region; that stretch reads MTGTPGAVATRDGEAPERSPPCS. The residue at position 2 (threonine 2) is an N-acetylthreonine. Positions 38, 39, 40, 41, 42, 43, 44, and 62 each coordinate GTP. Position 43 (threonine 43) interacts with Mg(2+). 2 short sequence motifs (switch) span residues 52–67 and 85–102; these read GAFLSGTFIATVGIDF and DTAGQERFRSVTHAYYRD. Mg(2+) contacts are provided by threonine 62 and aspartate 85. GTP-binding residues include glycine 88, asparagine 143, lysine 144, aspartate 146, methionine 147, serine 173, alanine 174, and lysine 175. 2 S-geranylgeranyl cysteine lipidation sites follow: cysteine 219 and cysteine 220. Position 220 is a cysteine methyl ester (cysteine 220). The propeptide at 221 to 223 is removed in mature form; sequence SFM.

Belongs to the small GTPase superfamily. Rab family. In terms of assembly, interacts with RIMS1. Interacts (in GDP-bound form) with RPGR, RPGR functions as guanine exchange factor (GEF). It depends on Mg(2+) as a cofactor.

The protein localises to the cytoplasmic vesicle. Its subcellular location is the cell projection. It localises to the cilium. It carries out the reaction GTP + H2O = GDP + phosphate + H(+). Its activity is regulated as follows. Regulated by guanine nucleotide exchange factors (GEFs) including RPGR which promote the exchange of bound GDP for free GTP. Regulated by GTPase activating proteins (GAPs) which increase the GTP hydrolysis activity. Inhibited by GDP dissociation inhibitors (GDIs). The small GTPases Rab are key regulators of intracellular membrane trafficking, from the formation of transport vesicles to their fusion with membranes. Rabs cycle between an inactive GDP-bound form and an active GTP-bound form that is able to recruit to membranes different sets of downstream effectors directly responsible for vesicle formation, movement, tethering and fusion. Acts as an organizer for autophagosome biogenesis in a GTP-dependent manner. Involved in retinal homeostasis by autophagy regulation. The chain is Ras-related protein Rab-37 from Homo sapiens (Human).